Here is a 371-residue protein sequence, read N- to C-terminus: S-adenosylmethionine:tRNA ribosyltransferase-isomerase (371 aa).

It belongs to the QueA family. Monomer.

It is found in the cytoplasm. The catalysed reaction is 7-aminomethyl-7-carbaguanosine(34) in tRNA + S-adenosyl-L-methionine = epoxyqueuosine(34) in tRNA + adenine + L-methionine + 2 H(+). It functions in the pathway tRNA modification; tRNA-queuosine biosynthesis. Transfers and isomerizes the ribose moiety from AdoMet to the 7-aminomethyl group of 7-deazaguanine (preQ1-tRNA) to give epoxyqueuosine (oQ-tRNA). The polypeptide is S-adenosylmethionine:tRNA ribosyltransferase-isomerase (Prochlorococcus marinus (strain MIT 9313)).